The chain runs to 186 residues: MSRRNPCKYEIRGHCLNGKKCHFSHNYFEWPPHALLVRQNFMLNKILKSMDRNNDTLSEISGAAELDRTEEYALGVIGVLESYLSSINNITKQSACVAMSKLLAEINNDDIKRLRNKEVPTSPKIRIYNTVISYIDSNKRNTKQTIHLLKRLPADVLKKTIKNTIDIHNEINGNNQGDINVDEQNE.

The segment at 1 to 28 (MSRRNPCKYEIRGHCLNGKKCHFSHNYF) adopts a C3H1-type zinc-finger fold. Residues 32–49 (PHALLVRQNFMLNKILKS) are oligomerization. Phosphoserine; by host occurs at positions 58 and 61. The tract at residues 76–171 (VIGVLESYLS…KNTIDIHNEI (96 aa)) is globular core. The binding to the phosphoprotein stretch occupies residues 126-163 (RIYNTVISYIDSNKRNTKQTIHLLKRLPADVLKKTIKN).

It belongs to the pneumoviridae M2-1 protein family. Homotetramer. The homotetramer interacts with RNA. Interacts with the phosphoprotein (P); this interaction is required for protein M2-1 function, localization in host inclusion bodies. Formation of a complex host PP1/M2-1/P allows P to target host PP1 phosphatase to the M2-1 substrate. Interacts with the nucleoprotein (N). Interacts with the matrix protein (M); this interaction directs M localization to cytoplasmic inclusions comprising viral proteins L, N, P, and M2-1 and mediates M association with the nucleocapsid. Interacts with host PABPC1 (via C-terminus). Phosphorylated by host in infected cells. Only dephosphorylated M2-1 is competent for viral mRNA binding. Cyclic turnover of phosphorylation-dephosphorylation of M2-1 is required for efficient viral transcription.

The protein resides in the virion. It localises to the host cytoplasm. It is found in the host nucleus. Its function is as follows. Acts as a tetrameric transcription processivity factor that binds in a competitive manner to RNA and the phosphoprotein (P) to prevent premature termination during transcription. Transcription anti-terminator that enhances readthrough of intergenic junctions during viral transcription. Preferentially binds to poly(A)-rich sequences. Plays a role in the association of the matrix protein with the nucleocapsid, which initiates assembly and budding. The chain is Protein M2-1 (M2-1) from Bos taurus (Bovine).